Here is a 130-residue protein sequence, read N- to C-terminus: Small ribosomal subunit protein uS9 (130 aa).

Belongs to the universal ribosomal protein uS9 family.

In Aeromonas salmonicida (strain A449), this protein is Small ribosomal subunit protein uS9.